The chain runs to 172 residues: UPF0316 protein Clos_0555 (172 aa).

3 helical membrane-spanning segments follow: residues alanine 3–isoleucine 23, valine 34–valine 54, and proline 61–leucine 81.

The protein belongs to the UPF0316 family.

The protein resides in the cell membrane. The polypeptide is UPF0316 protein Clos_0555 (Alkaliphilus oremlandii (strain OhILAs) (Clostridium oremlandii (strain OhILAs))).